A 405-amino-acid chain; its full sequence is Arginine biosynthesis bifunctional protein ArgJ (405 aa).

Positions 152, 178, 189, 276, 400, and 405 each coordinate substrate. The active-site Nucleophile is the Thr189.

The protein belongs to the ArgJ family. As to quaternary structure, heterotetramer of two alpha and two beta chains.

The protein resides in the cytoplasm. The catalysed reaction is N(2)-acetyl-L-ornithine + L-glutamate = N-acetyl-L-glutamate + L-ornithine. It catalyses the reaction L-glutamate + acetyl-CoA = N-acetyl-L-glutamate + CoA + H(+). The protein operates within amino-acid biosynthesis; L-arginine biosynthesis; L-ornithine and N-acetyl-L-glutamate from L-glutamate and N(2)-acetyl-L-ornithine (cyclic): step 1/1. Its pathway is amino-acid biosynthesis; L-arginine biosynthesis; N(2)-acetyl-L-ornithine from L-glutamate: step 1/4. Its function is as follows. Catalyzes two activities which are involved in the cyclic version of arginine biosynthesis: the synthesis of N-acetylglutamate from glutamate and acetyl-CoA as the acetyl donor, and of ornithine by transacetylation between N(2)-acetylornithine and glutamate. The protein is Arginine biosynthesis bifunctional protein ArgJ of Pseudomonas aeruginosa (strain ATCC 15692 / DSM 22644 / CIP 104116 / JCM 14847 / LMG 12228 / 1C / PRS 101 / PAO1).